The sequence spans 926 residues: ABC transporter A family member 6 (926 aa).

6 helical membrane passes run 34–54, 336–356, 389–409, 418–438, 451–471, and 525–545; these read LIVI…VFDS, ASLI…PVIL, FLAI…AIGL, TIQF…AFLV, VAYI…QFLI, and DEVF…TYYI. The ABC transporter domain occupies 610 to 847; that stretch reads IVCDNLKKVY…YGGSYVLTIT (238 aa). Residue 648 to 655 coordinates ATP; the sequence is GPNGAGKT.

The protein belongs to the ABC transporter superfamily. ABCA family. CPR flippase (TC 3.A.1.211) subfamily.

The protein resides in the membrane. The polypeptide is ABC transporter A family member 6 (ABCA6) (Arabidopsis thaliana (Mouse-ear cress)).